Here is a 676-residue protein sequence, read N- to C-terminus: MAPKTTLIAEPELVSKSVNTIRFLAIDAVEKAKSGHPGMPMGCAPMGHVLYDEFMRFNPKNPYWFNRDRFVLSAGHGCMLQYALLHLSGYDSVKEEDLKSLRQWGSRTPAHPENFETPGVEVTTGPLGQGIASAVGLAVAEKHLAARYNKPGFEIVDHYTYVILGDGCQMEGVSNEACSLAAHWGLGKLIALYDDNHITIDGDTDVAFTEDVDKRFDALGWHVIWVKNGNDGCDEIRAAIEEAKSVKDRPTMIKVTTTIGYGAPSKANTYGVHGNALGPKEAEATRKNLGWPYEPFHVPDDVKKHWSRHIAEGAALESAWNAKFAEFQKKFPEEAADLKSIITGELPTNWESIFPTYTPENPGLPTRTLSHQILNGLGDVLPGLLGGSADLTLSNMAFLKNSGDFQKKSPGERNVKFGAREHAMGSICNGLALHSPGLLPYCATYFVFTDYMRAAMRISALSKARVLYIMTHDSIGLGEDGPTHQPVEHLASFRAMPNILTLRPADGNETAGAYRAAVQNGERPSILVLARQKLPQLPGTSIEGVSKGGYVISDNSRGGNSKPDVILIGTGSELEIAARAGDELRKEGKKVRVVSLVCWELFAEQSEKYRETVLPSGVTARVSVEAGSTFGWERFIGPKGKAVGIDRFGASAPAERLFKEFGITVEAVVAAAKEIC.

His-36 contacts substrate. Thiamine diphosphate contacts are provided by residues His-76 and 125 to 127; that span reads GPL. Asp-166 is a Mg(2+) binding site. Residues Gly-167 and Asn-196 each contribute to the thiamine diphosphate site. Asn-196 and Ile-198 together coordinate Mg(2+). Residues His-273, Arg-367, and Ser-394 each coordinate substrate. His-273 is a thiamine diphosphate binding site. Positions 421 and 448 each coordinate thiamine diphosphate. The active-site Proton donor is the Glu-421. The substrate site is built by His-472, Asp-480, and Arg-531.

The protein belongs to the transketolase family. As to quaternary structure, homodimer. Requires Mg(2+) as cofactor. The cofactor is Ca(2+). It depends on Mn(2+) as a cofactor. Co(2+) is required as a cofactor. Thiamine diphosphate serves as cofactor. In terms of tissue distribution, leaves and roots.

It catalyses the reaction D-sedoheptulose 7-phosphate + D-glyceraldehyde 3-phosphate = aldehydo-D-ribose 5-phosphate + D-xylulose 5-phosphate. Could be involved in the conversion of sugars, which are a major phenomenon in the rehydration process. In terms of biological role, catalyzes the transfer of a two-carbon ketol group from a ketose donor to an aldose acceptor, via a covalent intermediate with the cofactor thiamine pyrophosphate. The polypeptide is Transketolase 7 (TKT7) (Craterostigma plantagineum (Blue gem)).